Consider the following 347-residue polypeptide: Pre-B-cell leukemia transcription factor 1 (347 aa).

Positions 1–40 are disordered; sequence MDDQPRLMHSHPGVGMAGHPSLSQHMQDGTGANEGEGGRK. The region spanning 38 to 232 is the PBC domain; it reads GRKQDIGDIL…VMILRSRFLD (195 aa). Positions 45-124 are PBC-A; the sequence is DILQQIMTIT…EGVAGPEKGG (80 aa). The interval 127–232 is PBC-B; that stretch reads AAAAAAAAAS…VMILRSRFLD (106 aa). The homeobox; TALE-type DNA-binding region spans 233 to 295; that stretch reads ARRKRRNFNK…NKRIRYKKNI (63 aa). Positions 318–331 are enriched in polar residues; the sequence is VHGSQANSPSTPSS. Positions 318–347 are disordered; it reads VHGSQANSPSTPSSAGGYPSPCYQSDRRIQ.

It belongs to the TALE/PBX homeobox family. As to quaternary structure, forms a heterodimer with meis1; the interaction is necessary for neural fate induction.

It localises to the nucleus. Acts as a transcriptional activator in complex with isoform 2 of meis1, to induce posterior neural and neural crest gene expression, and thereby specify hindbrain and neural crest cell fate. Binds to a highly conserved region in the promoter of the neural crest gene zic3. Required for the nuclear transport or retention of meis1. The protein is Pre-B-cell leukemia transcription factor 1 of Xenopus tropicalis (Western clawed frog).